We begin with the raw amino-acid sequence, 118 residues long: Large ribosomal subunit protein bL20 (118 aa).

This sequence belongs to the bacterial ribosomal protein bL20 family.

Its function is as follows. Binds directly to 23S ribosomal RNA and is necessary for the in vitro assembly process of the 50S ribosomal subunit. It is not involved in the protein synthesizing functions of that subunit. The sequence is that of Large ribosomal subunit protein bL20 from Kosmotoga olearia (strain ATCC BAA-1733 / DSM 21960 / TBF 19.5.1).